The chain runs to 508 residues: Cyclic AMP-responsive element-binding protein 5 (508 aa).

A C2H2-type zinc finger spans residues 16-40; it reads FVCSAPGCSQRFPTEDHLMIHRHKH. A Glycyl lysine isopeptide (Lys-Gly) (interchain with G-Cter in SUMO2) cross-link involves residue Lys50. Phosphothreonine is present on residues Thr59 and Thr61. Ser137 carries the post-translational modification Phosphoserine. Residues 265 to 391 are disordered; sequence RQDQTPHHHM…LERNRAAATR (127 aa). Composition is skewed to basic residues over residues 271–280 and 289–326; these read HHHMHSHPHQ and PYPHQHQHPAHHPHPQPHHQQNHPHHHSHSHLHAHPAH. Over residues 337 to 346 the composition is skewed to polar residues; it reads TGNQAQVSPA. Low complexity predominate over residues 347–357; sequence TQQMQPTQTIQ. The segment covering 369–386 has biased composition (basic and acidic residues); the sequence is VVDEDPDERRRKFLERNR. The bZIP domain occupies 375–438; the sequence is DERRRKFLER…AQLKQLLLTH (64 aa). Positions 377–397 are basic motif; that stretch reads RRRKFLERNRAAATRCRQKRK. The tract at residues 403 to 431 is leucine-zipper; that stretch reads LEKKAEELTQTNMQLQNEVSMLKNEVAQL. Residues 449–468 are disordered; the sequence is ESQGYLSPESSPPASPVPAC.

Belongs to the bZIP family. In terms of assembly, binds DNA as a homodimer or as a heterodimer with JUN or ATF2/CREBP1.

The protein localises to the nucleus. In terms of biological role, binds to the cAMP response element and activates transcription. The sequence is that of Cyclic AMP-responsive element-binding protein 5 (CREB5) from Homo sapiens (Human).